The sequence spans 382 residues: Lysophosphatidylserine lipase ABHD12 (382 aa).

Positions 1–12 are enriched in basic and acidic residues; sequence MRKRKGSADHDS. Positions 1-45 are disordered; the sequence is MRKRKGSADHDSSFTATLTDGSSDLKQCHKGTDADTDPGGSGKEM. Residues 1–60 lie on the Cytoplasmic side of the membrane; it reads MRKRKGSADHDSSFTATLTDGSSDLKQCHKGTDADTDPGGSGKEMGRRCRRGGLMWRLRR. Residues 13 to 25 show a composition bias toward polar residues; the sequence is SFTATLTDGSSDL. Residues 61 to 81 traverse the membrane as a helical segment; that stretch reads ILIWLLGIYIAIPVIIKVCPS. Over 82 to 382 the chain is Extracellular; the sequence is IQAKLVFLNF…DFLRAPHPHG (301 aa). Residue N109 is glycosylated (N-linked (GlcNAc...) asparagine). S232 functions as the Nucleophile in the catalytic mechanism. Residues D319 and H358 each act as charge relay system in the active site.

This sequence belongs to the serine esterase family. Ubiquitously expressed in adult tissues.

It localises to the endoplasmic reticulum membrane. The catalysed reaction is 1-(9Z-octadecenoyl)-sn-glycero-3-phospho-L-serine + H2O = sn-glycero-3-phospho-L-serine + (9Z)-octadecenoate + H(+). The enzyme catalyses 1-(9Z-octadecenoyl)-sn-glycero-3-phospho-(1'-sn-glycerol) + H2O = sn-glycero-3-phospho-(1'-sn-glycerol) + (9Z)-octadecenoate + H(+). It catalyses the reaction 1-(9Z-octadecenoyl)-sn-glycero-3-phospho-(1D-myo-inositol) + H2O = sn-glycero-3-phospho-1D-myo-inositol + (9Z)-octadecenoate + H(+). It carries out the reaction 1-(9Z-octadecenoyl)-sn-glycero-3-phosphoethanolamine + H2O = sn-glycero-3-phosphoethanolamine + (9Z)-octadecenoate + H(+). The catalysed reaction is 1-(9Z-octadecenoyl)-sn-glycero-3-phosphocholine + H2O = 1-(9Z-octadecenoyl)-sn-glycerol + phosphocholine + H(+). The enzyme catalyses 2-(9Z-octadecenoyl)-glycerol + H2O = glycerol + (9Z)-octadecenoate + H(+). It catalyses the reaction 1-hexadecanoyl-sn-glycero-3-phospho-L-serine + H2O = sn-glycero-3-phospho-L-serine + hexadecanoate + H(+). It carries out the reaction 2-(5Z,8Z,11Z,14Z-eicosatetraenoyl)-glycerol + H2O = glycerol + (5Z,8Z,11Z,14Z)-eicosatetraenoate + H(+). The catalysed reaction is Hydrolyzes glycerol monoesters of long-chain fatty acids.. The enzyme catalyses 1-decanoylglycerol + H2O = decanoate + glycerol + H(+). It catalyses the reaction 1-dodecanoylglycerol + H2O = dodecanoate + glycerol + H(+). It carries out the reaction 1-tetradecanoylglycerol + H2O = tetradecanoate + glycerol + H(+). The catalysed reaction is 2-hexadecanoylglycerol + H2O = glycerol + hexadecanoate + H(+). The enzyme catalyses 1-(9Z-octadecenoyl)-glycerol + H2O = glycerol + (9Z)-octadecenoate + H(+). It catalyses the reaction 2-(9Z,12Z-octadecadienoyl)-glycerol + H2O = (9Z,12Z)-octadecadienoate + glycerol + H(+). It carries out the reaction 1-(5Z,8Z,11Z,14Z-eicosatetraenoyl)-glycerol + H2O = glycerol + (5Z,8Z,11Z,14Z)-eicosatetraenoate + H(+). The catalysed reaction is 1-(9Z,12Z-octadecadienoyl)-glycerol + H2O = (9Z,12Z)-octadecadienoate + glycerol + H(+). The enzyme catalyses 1-hexadecanoylglycerol + H2O = glycerol + hexadecanoate + H(+). It catalyses the reaction 1-octadecanoylglycerol + H2O = octadecanoate + glycerol + H(+). It carries out the reaction 1-octadecanoyl-2-(9,10-epoxyoctadecanoyl)-sn-glycero-3-phospho-L-serine + H2O = 9,10-epoxyoctadecanoate + 1-octadecanoyl-sn-glycero-3-phosphoserine + H(+). The catalysed reaction is 1-octadecanoyl-2-(10-hydroxyoctadecanoyl)-sn-glycero-3-phospho-L-serine + H2O = 1-octadecanoyl-sn-glycero-3-phosphoserine + 10-hydroxyoctadecanoate + H(+). The enzyme catalyses 1-hexadecanoyl-2-(10-hydroxyoctadecanoyl)-sn-glycero-3-phospho-L-serine + H2O = 10-hydroxyoctadecanoate + 1-hexadecanoyl-sn-glycero-3-phospho-L-serine + H(+). Lysophosphatidylserine (LPS) lipase that mediates the hydrolysis of lysophosphatidylserine, a class of signaling lipids that regulates immunological and neurological processes. Represents a major lysophosphatidylserine lipase in the brain, thereby playing a key role in the central nervous system. Also able to hydrolyze oxidized phosphatidylserine; oxidized phosphatidylserine is produced in response to severe inflammatory stress and constitutes a proapoptotic 'eat me' signal. Also has monoacylglycerol (MAG) lipase activity: hydrolyzes 2-arachidonoylglycerol (2-AG), thereby acting as a regulator of endocannabinoid signaling pathways. Has a strong preference for very-long-chain lipid substrates; substrate specificity is likely due to improved catalysis and not improved substrate binding. This Danio rerio (Zebrafish) protein is Lysophosphatidylserine lipase ABHD12.